The following is a 738-amino-acid chain: Sporulation kinase E (738 aa).

PAS domains lie at Glu-29–Gly-99, Asn-150–Gly-220, Ser-271–Ile-342, and Ser-391–Met-462. The Histidine kinase domain occupies Gly-523–Gln-729. His-526 carries the phosphohistidine; by autocatalysis modification.

It catalyses the reaction ATP + protein L-histidine = ADP + protein N-phospho-L-histidine.. Functionally, phosphorylates the sporulation-regulatory protein spo0A under biofilm growth conditions. Also able to weakly phosphorylate spo0F. In Bacillus subtilis (strain 168), this protein is Sporulation kinase E (kinE).